A 73-amino-acid polypeptide reads, in one-letter code: Translational regulator CsrA (73 aa).

This sequence belongs to the CsrA/RsmA family. In terms of assembly, homodimer; the beta-strands of each monomer intercalate to form a hydrophobic core, while the alpha-helices form wings that extend away from the core.

It localises to the cytoplasm. Its function is as follows. A translational regulator that binds mRNA to regulate translation initiation and/or mRNA stability. Usually binds in the 5'-UTR at or near the Shine-Dalgarno sequence preventing ribosome-binding, thus repressing translation. Its main target seems to be the major flagellin gene, while its function is anatagonized by FliW. The protein is Translational regulator CsrA of Thermosipho africanus (strain TCF52B).